The following is a 351-amino-acid chain: Very-long-chain 3-oxoacyl-CoA reductase (351 aa).

Residues 26–46 traverse the membrane as a helical segment; that stretch reads LLWCAFTVGAVKLTTFMLSLI. Residues Leu-72, Asp-126, Asn-153, Tyr-225, Lys-229, Val-258, and Ser-260 each coordinate NADP(+). Tyr-225 (proton donor) is an active-site residue. The Lowers pKa of active site Tyr role is filled by Lys-229.

It belongs to the short-chain dehydrogenases/reductases (SDR) family.

It localises to the endoplasmic reticulum membrane. It catalyses the reaction a very-long-chain (3R)-3-hydroxyacyl-CoA + NADP(+) = a very-long-chain 3-oxoacyl-CoA + NADPH + H(+). Its pathway is lipid metabolism; fatty acid biosynthesis. Component of the microsomal membrane bound fatty acid elongation system, which produces the 26-carbon very long-chain fatty acids (VLCFA) from palmitate. Catalyzes the reduction of the 3-ketoacyl-CoA intermediate that is formed in each cycle of fatty acid elongation. VLCFAs serve as precursors for ceramide and sphingolipids. The protein is Very-long-chain 3-oxoacyl-CoA reductase of Eremothecium gossypii (strain ATCC 10895 / CBS 109.51 / FGSC 9923 / NRRL Y-1056) (Yeast).